Here is a 342-residue protein sequence, read N- to C-terminus: UDP-N-acetylglucosamine transporter YEA4 (342 aa).

At 1–6 (MWNSLK) the chain is on the cytoplasmic side. The helical transmembrane segment at 7–27 (AFALVFGGCCSNVITFETLMS) threads the bilayer. Over 28 to 35 (NETGSINN) the chain is Lumenal. The helical transmembrane segment at 36 to 56 (LITFCQFLFVTCQGLPEFLDV) threads the bilayer. The Cytoplasmic segment spans residues 57 to 61 (HQPFP). Residues 62-82 (YFKPLKTPLHVYVITVVLFYI) form a helical membrane-spanning segment. Residues 83 to 96 (SSTTNNNVFKYNIS) are Lumenal-facing. Residues 97–117 (IPIHIVFRCFGTVITMFTCWL) traverse the membrane as a helical segment. Topologically, residues 118 to 123 (LNGRKY) are cytoplasmic. Residues 124 to 144 (TKIQILSTLFLTIGAIIASLF) traverse the membrane as a helical segment. The Lumenal segment spans residues 145 to 168 (KDADFRYQDLKLQAWKIGSDQSVD). The chain crosses the membrane as a helical span at residues 169–189 (LTFIFGICILVLSSFTSSLLS). At 190–253 (AYNERTYQKY…GGKILVPREE (64 aa)) the chain is on the cytoplasmic side. Residues 254–274 (TLLLFNVLTQYFCVKGVNILA) form a helical membrane-spanning segment. Residues 275 to 307 (SKTNALTLSITLLVRKFISLLLSVRLFDNNLSY) are Lumenal-facing. The helical transmembrane segment at 308-328 (TGYIGVYLVFFGAFIYSLGSI) threads the bilayer. Residues 329–342 (HPRQNDKGAIKKSK) lie on the Cytoplasmic side of the membrane.

The protein belongs to the nucleotide-sugar transporter family. SLC35B subfamily.

Its subcellular location is the endoplasmic reticulum. It localises to the endoplasmic reticulum membrane. Functionally, sugar transporter that specifically mediates the transport of UDP-N-acetylglucosamine (UDP-GlcNAc) and is required for cell wall chitin synthesis. The sequence is that of UDP-N-acetylglucosamine transporter YEA4 (YEA4) from Saccharomyces cerevisiae (strain ATCC 204508 / S288c) (Baker's yeast).